Here is a 326-residue protein sequence, read N- to C-terminus: 5-dehydro-2-deoxygluconokinase (326 aa).

Belongs to the carbohydrate kinase PfkB family.

It catalyses the reaction 5-dehydro-2-deoxy-D-gluconate + ATP = 6-phospho-5-dehydro-2-deoxy-D-gluconate + ADP + H(+). Its pathway is polyol metabolism; myo-inositol degradation into acetyl-CoA; acetyl-CoA from myo-inositol: step 5/7. Catalyzes the phosphorylation of 5-dehydro-2-deoxy-D-gluconate (2-deoxy-5-keto-D-gluconate or DKG) to 6-phospho-5-dehydro-2-deoxy-D-gluconate (DKGP). The protein is 5-dehydro-2-deoxygluconokinase of Lacticaseibacillus casei (Lactobacillus casei).